A 360-amino-acid polypeptide reads, in one-letter code: Mitogen-activated protein kinase 1 (360 aa).

Position 2 is an N-acetylalanine (alanine 2). The Protein kinase domain occupies 25–313 (YTNLSYIGEG…VEQALAHPYL (289 aa)). Serine 29 is modified (phosphoserine; by SGK1). Residues 31–39 (IGEGAYGMV) and lysine 54 each bind ATP. Aspartate 149 (proton acceptor) is an active-site residue. Residue threonine 185 is modified to Phosphothreonine; by MAP2K1 and MAP2K2. The TXY motif lies at 185–187 (TEY). Phosphotyrosine; by MAP2K1 and MAP2K2 is present on tyrosine 187. Threonine 190 is modified (phosphothreonine; by autocatalysis). 2 positions are modified to phosphoserine: serine 246 and serine 248. Residues 259–277 (KARNYLLSLPHKNKVPWNR) mediate DNA binding. Phosphoserine is present on serine 284. The Cytoplasmic retention motif motif lies at 318–322 (DPSDE). The short motif at 327–333 (APFKFDM) is the Nuclear translocation motif element.

It belongs to the protein kinase superfamily. CMGC Ser/Thr protein kinase family. MAP kinase subfamily. In terms of assembly, binds both upstream activators and downstream substrates in multimolecular complexes. This interaction inhibits its tyrosine-kinase activity. Interacts with ADAM15, ARHGEF2, ARRB2, DAPK1 (via death domain), HSF4, IER3, IPO7, NISCH, SGK1, and isoform 1 of NEK2. Interacts (via phosphorylated form) with TPR (via C-terminal region and phosphorylated form); the interaction requires dimerization of MAPK1/ERK2 and increases following EGF stimulation. Interacts with MAP2K1. Interacts with DUSP6. Interacts (phosphorylated form) with CAV2 ('Tyr-19'-phosphorylated form); the interaction, promoted by insulin, leads to nuclear location and MAPK1 activation. Interacts with MORG1, PEA15 and MKNK2. MKNK2 isoform 1 binding prevents from dephosphorylation and inactivation. Interacts with DCC. The phosphorylated form interacts with PML (isoform PML-4). Interacts with STYX. Interacts with CDK2AP2. Interacts with CAVIN4. Interacts with DUSP7; the interaction enhances DUSP7 phosphatase activity. Interacts with GIT1; this interaction is necessary for MAPK1 localization to focal adhesions. Interacts with ZNF263. Interacts with phosphoglycerate kinase PGK1; the interaction is direct, occurs under hypoxic conditions, and promotes interaction between PGK1 and PIN1. (Microbial infection) Interacts with HIV-1 Nef through its SH3 domain. The cofactor is Mg(2+). Phosphorylated upon KIT and FLT3 signaling. Dually phosphorylated on Thr-185 and Tyr-187, which activates the enzyme. Undergoes regulatory phosphorylation on additional residues such as Ser-246 and Ser-248 in the kinase insert domain (KID) These phosphorylations, which are probably mediated by more than one kinase, are important for binding of MAPK1/ERK2 to importin-7 (IPO7) and its nuclear translocation. In addition, autophosphorylation of Thr-190 was shown to affect the subcellular localization of MAPK1/ERK2 as well. Ligand-activated ALK induces tyrosine phosphorylation. Dephosphorylated by PTPRJ at Tyr-187. Phosphorylation on Ser-29 by SGK1 results in its activation by enhancing its interaction with MAP2K1/MEK1 and MAP2K2/MEK2. DUSP3 and DUSP6 dephosphorylate specifically MAPK1/ERK2 and MAPK3/ERK1 whereas DUSP9 dephosphorylates a broader range of MAPKs. Dephosphorylated by DUSP1 and DUSP2 at Thr-185 and Tyr-187. Post-translationally, ISGylated. In terms of processing, ubiquitinated by TRIM15 via 'Lys-63'-linked ubiquitination; leading to activation. Deubiquitinated by CYLD.

The protein localises to the cytoplasm. It localises to the cytoskeleton. The protein resides in the spindle. It is found in the nucleus. Its subcellular location is the microtubule organizing center. The protein localises to the centrosome. It localises to the membrane. The protein resides in the caveola. It is found in the cell junction. Its subcellular location is the focal adhesion. It catalyses the reaction L-seryl-[protein] + ATP = O-phospho-L-seryl-[protein] + ADP + H(+). The enzyme catalyses L-threonyl-[protein] + ATP = O-phospho-L-threonyl-[protein] + ADP + H(+). Its activity is regulated as follows. Phosphorylated by MAP2K1/MEK1 and MAP2K2/MEK2 on Thr-185 and Tyr-187 in response to external stimuli like insulin or NGF. Both phosphorylations are required for activity. This phosphorylation causes dramatic conformational changes, which enable full activation and interaction of MAPK1/ERK2 with its substrates. Phosphorylation on Ser-29 by SGK1 results in its activation by enhancing its interaction with MAP2K1/MEK1 and MAP2K2/MEK2. Dephosphorylated and inactivated by DUSP1, DUSP3, DUSP6 and DUSP9. Inactivated by pyrimidylpyrrole inhibitors. In terms of biological role, serine/threonine kinase which acts as an essential component of the MAP kinase signal transduction pathway. MAPK1/ERK2 and MAPK3/ERK1 are the 2 MAPKs which play an important role in the MAPK/ERK cascade. They participate also in a signaling cascade initiated by activated KIT and KITLG/SCF. Depending on the cellular context, the MAPK/ERK cascade mediates diverse biological functions such as cell growth, adhesion, survival and differentiation through the regulation of transcription, translation, cytoskeletal rearrangements. The MAPK/ERK cascade also plays a role in initiation and regulation of meiosis, mitosis, and postmitotic functions in differentiated cells by phosphorylating a number of transcription factors. About 160 substrates have already been discovered for ERKs. Many of these substrates are localized in the nucleus, and seem to participate in the regulation of transcription upon stimulation. However, other substrates are found in the cytosol as well as in other cellular organelles, and those are responsible for processes such as translation, mitosis and apoptosis. Moreover, the MAPK/ERK cascade is also involved in the regulation of the endosomal dynamics, including lysosome processing and endosome cycling through the perinuclear recycling compartment (PNRC); as well as in the fragmentation of the Golgi apparatus during mitosis. The substrates include transcription factors (such as ATF2, BCL6, ELK1, ERF, FOS, HSF4 or SPZ1), cytoskeletal elements (such as CANX, CTTN, GJA1, MAP2, MAPT, PXN, SORBS3 or STMN1), regulators of apoptosis (such as BAD, BTG2, CASP9, DAPK1, IER3, MCL1 or PPARG), regulators of translation (such as EIF4EBP1 and FXR1) and a variety of other signaling-related molecules (like ARHGEF2, DCC, FRS2 or GRB10). Protein kinases (such as RAF1, RPS6KA1/RSK1, RPS6KA3/RSK2, RPS6KA2/RSK3, RPS6KA6/RSK4, SYK, MKNK1/MNK1, MKNK2/MNK2, RPS6KA5/MSK1, RPS6KA4/MSK2, MAPKAPK3 or MAPKAPK5) and phosphatases (such as DUSP1, DUSP4, DUSP6 or DUSP16) are other substrates which enable the propagation the MAPK/ERK signal to additional cytosolic and nuclear targets, thereby extending the specificity of the cascade. Mediates phosphorylation of TPR in response to EGF stimulation. May play a role in the spindle assembly checkpoint. Phosphorylates PML and promotes its interaction with PIN1, leading to PML degradation. Phosphorylates CDK2AP2. Phosphorylates phosphoglycerate kinase PGK1 under hypoxic conditions to promote its targeting to the mitochondrion and suppress the formation of acetyl-coenzyme A from pyruvate. Its function is as follows. Acts as a transcriptional repressor. Binds to a [GC]AAA[GC] consensus sequence. Repress the expression of interferon gamma-induced genes. Seems to bind to the promoter of CCL5, DMP1, IFIH1, IFITM1, IRF7, IRF9, LAMP3, OAS1, OAS2, OAS3 and STAT1. Transcriptional activity is independent of kinase activity. This is Mitogen-activated protein kinase 1 from Homo sapiens (Human).